The sequence spans 361 residues: Adenosine kinase (361 aa).

Positions P7 to E15 match the Nuclear localization signal motif. Residue D34 participates in adenosine binding. S48 provides a ligand contact to Mg(2+). Y76 carries the post-translational modification Phosphotyrosine. Residue N147 coordinates Mg(2+). Q305 is an adenosine binding site. D316 is a catalytic residue. The active-site Proton acceptor is D316.

Belongs to the carbohydrate kinase PfkB family. Monomer. Mg(2+) is required as a cofactor.

The protein resides in the nucleus. It carries out the reaction adenosine + ATP = AMP + ADP + H(+). The protein operates within purine metabolism; AMP biosynthesis via salvage pathway; AMP from adenosine: step 1/1. Functionally, catalyzes the phosphorylation of the purine nucleoside adenosine at the 5' position in an ATP-dependent manner. Serves as a potential regulator of concentrations of extracellular adenosine and intracellular adenine nucleotides. The protein is Adenosine kinase (Adk) of Rattus norvegicus (Rat).